Reading from the N-terminus, the 499-residue chain is Glutelin type-A 2 (499 aa).

An N-terminal signal peptide occupies residues 1–24; the sequence is MASINRPIVFFTVCLFLLCDGSLA. 2 disulfide bridges follow: Cys-46-Cys-79 and Cys-122-Cys-313. A Cupin type-1 1 domain is found at 51–248; the sequence is LQAFEPIRSV…AFGISNQVAR (198 aa). A disordered region spans residues 280 to 300; that stretch reads EQGQMQSREHYQEGGYQQSQY. The Cupin type-1 2 domain occupies 319 to 468; the sequence is QNIDNPNRAD…AYRISREEAQ (150 aa).

Belongs to the 11S seed storage protein (globulins) family. As to quaternary structure, hexamer; each subunit is composed of an acidic and a basic chain derived from a single precursor and linked by a disulfide bond.

Functionally, seed storage protein. This is Glutelin type-A 2 (GLUA2) from Oryza sativa subsp. japonica (Rice).